The chain runs to 304 residues: UDP-N-acetylenolpyruvoylglucosamine reductase (304 aa).

Residues 33–198 form the FAD-binding PCMH-type domain; it reads RVGGPADILV…IEATIELESG (166 aa). Arg177 is a catalytic residue. Catalysis depends on Ser227, which acts as the Proton donor. Residue Glu297 is part of the active site.

Belongs to the MurB family. FAD is required as a cofactor.

Its subcellular location is the cytoplasm. It catalyses the reaction UDP-N-acetyl-alpha-D-muramate + NADP(+) = UDP-N-acetyl-3-O-(1-carboxyvinyl)-alpha-D-glucosamine + NADPH + H(+). The protein operates within cell wall biogenesis; peptidoglycan biosynthesis. Cell wall formation. In Clostridium perfringens (strain SM101 / Type A), this protein is UDP-N-acetylenolpyruvoylglucosamine reductase.